A 496-amino-acid chain; its full sequence is Isocitrate dehydrogenase [NADP] (496 aa).

Residues Leu-88 and Thr-90 each contribute to the NADP(+) site. The D-threo-isocitrate site is built by Ser-98, Asn-100, Arg-104, Arg-114, and Arg-137. Residues Asn-193, Gln-229, and Lys-232 each coordinate NADP(+). Asp-248 contacts Mg(2+). The NADP(+) site is built by Glu-277, Gly-281, Ser-282, Ala-283, Lys-285, Tyr-286, and Asn-293.

Belongs to the isocitrate and isopropylmalate dehydrogenases family. Homodimer. Mg(2+) serves as cofactor. Requires Mn(2+) as cofactor.

The enzyme catalyses D-threo-isocitrate + NADP(+) = 2-oxoglutarate + CO2 + NADPH. Functionally, catalyzes the oxidative decarboxylation of isocitrate to 2-oxoglutarate and carbon dioxide with the concomitant reduction of NADP(+). The chain is Isocitrate dehydrogenase [NADP] (icd) from Thermus thermophilus (strain ATCC 27634 / DSM 579 / HB8).